The following is a 165-amino-acid chain: MFDVSFTELIVIGVVALIVLGPERLPKVARTVGHLLGRAQRYVHDVKSDIQREIELDELRKFKQQIDSTAQDVNQSLRSATDSLRASGDSLRAELDDTARTVNEAAADIQRTIAPHPAITAETDTSKLPGTPATLPATAAAEPTPAAPAASQAEAPKSPSTGNAT.

The helical transmembrane segment at 1–21 threads the bilayer; the sequence is MFDVSFTELIVIGVVALIVLG. Residues 67-84 show a composition bias toward polar residues; it reads DSTAQDVNQSLRSATDSL. The disordered stretch occupies residues 67–165; sequence DSTAQDVNQS…PKSPSTGNAT (99 aa). Low complexity predominate over residues 127 to 159; that stretch reads KLPGTPATLPATAAAEPTPAAPAASQAEAPKSP.

This sequence belongs to the TatB family. In terms of assembly, the Tat system comprises two distinct complexes: a TatABC complex, containing multiple copies of TatA, TatB and TatC subunits, and a separate TatA complex, containing only TatA subunits. Substrates initially bind to the TatABC complex, which probably triggers association of the separate TatA complex to form the active translocon.

The protein resides in the cell inner membrane. In terms of biological role, part of the twin-arginine translocation (Tat) system that transports large folded proteins containing a characteristic twin-arginine motif in their signal peptide across membranes. Together with TatC, TatB is part of a receptor directly interacting with Tat signal peptides. TatB may form an oligomeric binding site that transiently accommodates folded Tat precursor proteins before their translocation. The chain is Sec-independent protein translocase protein TatB from Bordetella avium (strain 197N).